The sequence spans 847 residues: Ras GTPase-activating protein 2 (847 aa).

The span at 1–21 (MAAAAPAAAASPEAPAVSGSA) shows a compositional bias: low complexity. The disordered stretch occupies residues 1-31 (MAAAAPAAAASPEAPAVSGSADPETGDEDSR). Ala-2 is modified (N-acetylalanine). C2 domains follow at residues 19 to 137 (GSAD…ETWF) and 148 to 288 (VQGK…QAWY). The Ras-GAP domain occupies 371 to 588 (NKLVPFITAV…TDVKKFLDEI (218 aa)). Ser-554 carries the post-translational modification Phosphoserine. In terms of domain architecture, PH spans 603–704 (VHLKEGEMYK…WIDVLCRVSR (102 aa)). The Btk-type zinc finger occupies 706 to 742 (NHNRLSSFHPSAYLNGNWLCCQETSESTPGCKPCTAG). Residues His-714, Cys-725, Cys-726, and Cys-736 each contribute to the Zn(2+) site. The tract at residues 819-847 (DEPHEKYRKKRSSSAKYGSKENPIVGKIS) is disordered.

It localises to the cell membrane. Inhibitory regulator of the Ras-cyclic AMP pathway. Binds inositol tetrakisphosphate (IP4) and phospholipids. The polypeptide is Ras GTPase-activating protein 2 (Rasa2) (Mus musculus (Mouse)).